A 227-amino-acid chain; its full sequence is MMGIRIAIDGPASSGKSTVAKIIAKKLGYVYLDTGAMYRSATYLALQNDTDLTDERAIVKLLKDYPISFGRRKDDSEQLVFVGNVEVSHPIRENEVTNNVSTVAALPLVRKTLVDLQQQLAKKGGIVMDGRDIGTVVLPDAELKIFLIASVEERAERRYRENLEKGIQTDFNTLKKEIAERDYKDSHRKISPLKPAADAITFDTTGIDIAGVVNFIEKKAQNIIDRS.

Residue 10 to 18 (GPASSGKST) participates in ATP binding.

The protein belongs to the cytidylate kinase family. Type 1 subfamily.

The protein resides in the cytoplasm. It carries out the reaction CMP + ATP = CDP + ADP. It catalyses the reaction dCMP + ATP = dCDP + ADP. This is Cytidylate kinase from Streptococcus mutans serotype c (strain ATCC 700610 / UA159).